The primary structure comprises 865 residues: Xylosyltransferase 2 (865 aa).

At Met-1–Lys-15 the chain is on the cytoplasmic side. A helical; Signal-anchor for type II membrane protein transmembrane segment spans residues Leu-16–Ser-36. The Lumenal segment spans residues Gly-37–Arg-865. The interval Asp-41 to Gly-157 is disordered. Residues Arg-53 to Asp-65 show a composition bias toward basic and acidic residues. Residues Ser-73–Arg-82 are compositionally biased toward basic residues. N-linked (GlcNAc...) asparagine glycosylation occurs at Asn-122. The span at Gly-125–Gly-137 shows a compositional bias: low complexity. Intrachain disulfides connect Cys-162–Cys-190, Cys-206–Cys-448, Cys-467–Cys-480, and Cys-469–Cys-478. UDP-alpha-D-xylose is bound by residues Val-239, Asp-267, and Thr-296–Trp-298. Asn-327 carries an N-linked (GlcNAc...) asparagine glycan. Asp-400–Trp-401 contributes to the UDP-alpha-D-xylose binding site. Residues Ser-481 and Arg-504 to Lys-505 contribute to the UDP-alpha-D-xylose site. 2 disulfides stabilise this stretch: Cys-581–Cys-833 and Cys-826–Cys-839. N-linked (GlcNAc...) asparagine glycosylation is present at Asn-683. The segment at Ser-846–Arg-865 is disordered.

It belongs to the glycosyltransferase 14 family. XylT subfamily. Monomer. Mg(2+) is required as a cofactor. Requires Mn(2+) as cofactor. Post-translationally, contains disulfide bonds.

It localises to the golgi apparatus membrane. Its subcellular location is the secreted. It catalyses the reaction UDP-alpha-D-xylose + L-seryl-[protein] = 3-O-(beta-D-xylosyl)-L-seryl-[protein] + UDP + H(+). It participates in glycan metabolism; chondroitin sulfate biosynthesis. Its pathway is glycan metabolism; heparan sulfate biosynthesis. In terms of biological role, catalyzes the first step in the biosynthesis of chondroitin sulfate, heparan sulfate and dermatan sulfate proteoglycans, such as DCN. Transfers D-xylose from UDP-D-xylose to specific serine residues of the core protein. In Pan troglodytes (Chimpanzee), this protein is Xylosyltransferase 2 (XYLT2).